Reading from the N-terminus, the 224-residue chain is MAVTFTDLHTADGLKALEQHLSGKTYVSGNAISKDDIKVFAAVPSKPGAEFPNAARWYDTVAAALASRFPGKAVGVNLPGGGAASSAAAAAPAAKDADEDDDDLDLFGDETEEDKKAADERAASKASSKKKESGKSSVLLDVKPWDDETDMKKLEEAVRSVQMEGLTWGASKLVPVGYGIKKLQIMLTIVDDLVSVDSLIEEHLTEEPINEFVQSCDIVAFNKI.

This sequence belongs to the EF-1-beta/EF-1-delta family. In terms of assembly, EF-1 is composed of 4 subunits: alpha, beta (1B-alpha=beta'), delta (1B-beta), and gamma (1B-gamma).

In terms of biological role, EF-1-beta and EF-1-beta' stimulate the exchange of GDP bound to EF-1-alpha to GTP. The protein is Elongation factor 1-beta of Oryza sativa subsp. japonica (Rice).